We begin with the raw amino-acid sequence, 589 residues long: Probable translation initiation factor IF-2 (589 aa).

The region spanning leucine 14–glutamate 229 is the tr-type G domain. The G1 stretch occupies residues glycine 23 to threonine 30. Glycine 23–threonine 30 serves as a coordination point for GTP. The segment at glycine 48 to arginine 52 is G2. A G3 region spans residues aspartate 84–glycine 87. GTP contacts are provided by residues aspartate 84–histidine 88 and asparagine 138–aspartate 141. Positions asparagine 138–aspartate 141 are G4. The tract at residues serine 206 to lysine 208 is G5.

This sequence belongs to the TRAFAC class translation factor GTPase superfamily. Classic translation factor GTPase family. IF-2 subfamily.

Functionally, function in general translation initiation by promoting the binding of the formylmethionine-tRNA to ribosomes. Seems to function along with eIF-2. In Thermoplasma acidophilum (strain ATCC 25905 / DSM 1728 / JCM 9062 / NBRC 15155 / AMRC-C165), this protein is Probable translation initiation factor IF-2 (infB).